The chain runs to 419 residues: N-acylglucosamine 2-epimerase (419 aa).

The tract at residues 185–206 (LLNLVEQLGEEDEEMTDKYAEL) is leucine-zipper. Residue S418 is modified to Phosphoserine.

It belongs to the N-acylglucosamine 2-epimerase family. Homodimer. Forms a heterodimer with renin and inhibits its activity. In terms of tissue distribution, kidney, adrenal gland, brain, lung, spleen, ovary, testis and heart.

The catalysed reaction is an N-acyl-D-glucosamine = an N-acyl-D-mannosamine. The protein operates within amino-sugar metabolism; N-acetylneuraminate degradation. Its function is as follows. Catalyzes the interconversion of N-acetylglucosamine to N-acetylmannosamine. Involved in the N-glycolylneuraminic acid (Neu5Gc) degradation pathway. In Rattus norvegicus (Rat), this protein is N-acylglucosamine 2-epimerase (Renbp).